The sequence spans 294 residues: Homoserine kinase (294 aa).

84–94 (PFSRGLGSSSA) is a binding site for ATP.

It belongs to the GHMP kinase family. Homoserine kinase subfamily.

Its subcellular location is the cytoplasm. It carries out the reaction L-homoserine + ATP = O-phospho-L-homoserine + ADP + H(+). It functions in the pathway amino-acid biosynthesis; L-threonine biosynthesis; L-threonine from L-aspartate: step 4/5. Catalyzes the ATP-dependent phosphorylation of L-homoserine to L-homoserine phosphate. In Campylobacter concisus (strain 13826), this protein is Homoserine kinase.